A 530-amino-acid polypeptide reads, in one-letter code: MARAGWTGLLPLYVCLLLTCGFAKAGKLLVVPMDGSHWFTMQSVVEKLILRGHEVVVVMPEVSWQLGRSLNCTVKTYSTSYTLEDQDREFMVFADARWTAPLRSAFSLLTSSSNGIFDLFFSNCRSLFNDRKLVEYLKESCFDAVFLDPFDACGLIVAKYFSLPSVVFARGIFCHYLEEGAQCPAPLSYVPRLLLGFSDAMTFKERVWNHIMHLEEHLFCPYFFKNVLEIASEILQTPVTAYDLYSHTSIWLLRTDFVLEYPKPVMPNMIFIGGINCHQGKPVPMEFEAYINASGEHGIVVFSLGSMVSEIPEKKAMAIADALGKIPQTVLWRYTGTRPSNLANNTILVKWLPQNDLLGHPMTRAFITHAGSHGVYESICNGVPMVMMPLFGDQMDNAKRMETKGAGVTLNVLEMTSEDLENALKAVINDKSYKENIMRLSSLHKDRPVEPLDLAVFWVEFVMRHKGAPHLRPAAHDLTWYQYHSLDVIGFLLAVVLTVAFITFKCCAYGYRKCLGKKGRVKKAHKSKTH.

The first 25 residues, 1–25 (MARAGWTGLLPLYVCLLLTCGFAKA), serve as a signal peptide directing secretion. N-linked (GlcNAc...) asparagine glycosylation is found at Asn71, Asn292, and Asn344. Residues 488–504 (VIGFLLAVVLTVAFITF) form a helical membrane-spanning segment.

Belongs to the UDP-glycosyltransferase family. In terms of assembly, homodimer. Homooligomer. Interacts with UGT1A1, UGT1A3, UGT1A4, UGT1A6, UGT1A8, UGT1A9 and UGT1A10 to form heterodimers. Isoform 1 interacts with isoform 2/i2 suggesting that oligomerization is involved in negative regulation of transferase activity by isoform 2. Isoform 1 also interacts with respective i2 isoforms of UGT1A1, UGT1A3, UGT1A4, UGT1A6, UGT1A8, UGT1A9 and UGT1A10. As to expression, liver and gastric tissue. Isoform 1 and isoform 2 are expressed in esophagus. Neither isoform is expressed in liver, kidney, colon and small intestine.

It localises to the endoplasmic reticulum membrane. It carries out the reaction glucuronate acceptor + UDP-alpha-D-glucuronate = acceptor beta-D-glucuronoside + UDP + H(+). The enzyme catalyses 17alpha-estradiol + UDP-alpha-D-glucuronate = 17alpha-estradiol 3-O-(beta-D-glucuronate) + UDP + H(+). The catalysed reaction is prunetin + UDP-alpha-D-glucuronate = prunetin-5-O-beta-D-glucuronide + UDP. It catalyses the reaction 5-epi-5-F2t-IsoP + UDP-alpha-D-glucuronate = 5-epi-5-F2t-IsoP-glucuronide + UDP + H(+). It carries out the reaction (E)-ferulate + UDP-alpha-D-glucuronate = (E)-ferulic acid beta-D-glucuronate ester + UDP. The enzyme catalyses candesartan + UDP-alpha-D-glucuronate = candesartan O-beta-D-glucuronoside + UDP. The catalysed reaction is SN-38 + UDP-alpha-D-glucuronate = SN-38 O-beta-D-glucuronide + UDP + H(+). It catalyses the reaction mycophenolate + UDP-alpha-D-glucuronate = mycophenolate 7-O-beta-D-glucuronide + UDP + H(+). UDP-glucuronosyltransferase (UGT) that catalyzes phase II biotransformation reactions in which lipophilic substrates are conjugated with glucuronic acid to increase the metabolite's water solubility, thereby facilitating excretion into either the urine or bile. Essential for the elimination and detoxification of drugs, xenobiotics and endogenous compounds. Catalyzes the glucuronidation of endogenous estrogen hormone epiestradiol. Involved in the glucuronidation of F2-isoprostane (5-epi-5-F2t-IsoP). Involved in the glucuronidation of the phytochemical ferulic acid at the carboxylic acid group. Also catalyzes the glucuronidation of the isoflavones genistein, daidzein, glycitein, formononetin, biochanin A and prunetin, which are phytoestrogens with anticancer and cardiovascular properties. Involved in the glucuronidation of the AGTR1 angiotensin receptor antagonist caderastan, a drug which can inhibit the effect of angiotensin II. Involved in the biotransformation of 7-ethyl-10-hydroxycamptothecin (SN-38), the pharmacologically active metabolite of the anticancer drug irinotecan. Also metabolizes mycophenolate, an immunosuppressive agent. Functionally, lacks UGT glucuronidation activity but acts as a negative regulator of isoform 1. The chain is UDP-glucuronosyltransferase 1A7 from Homo sapiens (Human).